A 398-amino-acid polypeptide reads, in one-letter code: uncharacterized protein (398 aa).

Belongs to the glycosyltransferase 2 family.

This is an uncharacterized protein from Escherichia coli (strain K12).